A 597-amino-acid polypeptide reads, in one-letter code: Probable tyrosine-protein phosphatase (597 aa).

The segment covering 55–81 has biased composition (low complexity); the sequence is VSSSSDAAPTSISTTTTSTTSMTDASA. Disordered regions lie at residues 55–89, 107–172, and 188–228; these read VSSSSDAAPTSISTTTTSTTSMTDASANADNQQVY, SFSI…PNSL, and STNG…GNNN. The span at 107–126 shows a compositional bias: polar residues; that stretch reads SFSIQPNQTPTMLPTSSYTL. A compositionally biased stretch (low complexity) spans 136–151; the sequence is TSSISSISSTSSNSTS. 2 stretches are compositionally biased toward polar residues: residues 188–206 and 216–228; these read STNGYTSPLPKSTNSNQPR and KKSTPVNRIGNNN. The Tyrosine-protein phosphatase domain occupies 428 to 579; sequence GPKNVLNNLI…LMEFGDKLNN (152 aa). The active-site Phosphocysteine intermediate is the C516.

Belongs to the protein-tyrosine phosphatase family. Non-receptor class dual specificity subfamily.

It catalyses the reaction O-phospho-L-tyrosyl-[protein] + H2O = L-tyrosyl-[protein] + phosphate. In Candida albicans (strain WO-1) (Yeast), this protein is Probable tyrosine-protein phosphatase (CPP1).